We begin with the raw amino-acid sequence, 350 residues long: MGDRVTVGIVGASGYGGVQLVRLLLEHPKVDIVYLGGEGSAGRPYTELYPHLQGRVNLTVEPVSVEVIRDRAQVVFLSLPNGIACQLAPQLLEQGCKVLDLSADYRFQDLQTYTQWYGEPREDQATAQKAVYGLPELYRDRIRQSALIGCPGCYPTASLLALAPLMKQGLIEPNTAIIDAKSGTSGGGRQGKINLLLAEADNSLAPYNVARHRHTPEIEAICSDLAGQSVLVQFTPHLVPMPRGILATVYATLRDPGLVREDLITIYQAFYRHSPWVNILPPGLYPQTKWAWGTNACFIGIEVDERTGRVIVMSAIDNLMKGQASQAVQCLNLMMGWPETMGLPQVAFYP.

Cys153 is a catalytic residue.

It belongs to the NAGSA dehydrogenase family. Type 1 subfamily.

The protein resides in the cytoplasm. It carries out the reaction N-acetyl-L-glutamate 5-semialdehyde + phosphate + NADP(+) = N-acetyl-L-glutamyl 5-phosphate + NADPH + H(+). Its pathway is amino-acid biosynthesis; L-arginine biosynthesis; N(2)-acetyl-L-ornithine from L-glutamate: step 3/4. Catalyzes the NADPH-dependent reduction of N-acetyl-5-glutamyl phosphate to yield N-acetyl-L-glutamate 5-semialdehyde. The chain is N-acetyl-gamma-glutamyl-phosphate reductase from Thermosynechococcus vestitus (strain NIES-2133 / IAM M-273 / BP-1).